A 252-amino-acid polypeptide reads, in one-letter code: Small ribosomal subunit protein eS4 (252 aa).

The S4 RNA-binding domain occupies 43-105 (FPLLIIVRDI…TGETYRVIPV (63 aa)).

Belongs to the eukaryotic ribosomal protein eS4 family.

The sequence is that of Small ribosomal subunit protein eS4 from Staphylothermus marinus (strain ATCC 43588 / DSM 3639 / JCM 9404 / F1).